The primary structure comprises 565 residues: Phospholipase B-like protein C (565 aa).

The signal sequence occupies residues 1 to 21 (MNKIIILISLFLNFLFGYVVC). Residues Asn53, Asn84, Asn118, Asn200, Asn201, Asn211, Asn266, Asn302, Asn406, and Asn485 are each glycosylated (N-linked (GlcNAc...) asparagine).

It belongs to the phospholipase B-like family.

The protein localises to the secreted. In terms of biological role, probable phospholipase. In Dictyostelium discoideum (Social amoeba), this protein is Phospholipase B-like protein C (plbC).